The chain runs to 91 residues: Cell division protein FtsB (91 aa).

Over 1-3 (MKF) the chain is Cytoplasmic. The helical transmembrane segment at 4–21 (IVGLLLVLLLALQYQLWI) threads the bilayer. At 22–91 (SKDGLGELRQ…ETFFQVVEEP (70 aa)) the chain is on the periplasmic side. Residues 26–74 (LGELRQLSRSIKQQRHENATLIERNQVLKAEVQDLKSGLDALEERARSG) adopt a coiled-coil conformation.

Belongs to the FtsB family. In terms of assembly, part of a complex composed of FtsB, FtsL and FtsQ.

It is found in the cell inner membrane. Its function is as follows. Essential cell division protein. May link together the upstream cell division proteins, which are predominantly cytoplasmic, with the downstream cell division proteins, which are predominantly periplasmic. This chain is Cell division protein FtsB, found in Nitrosococcus oceani (strain ATCC 19707 / BCRC 17464 / JCM 30415 / NCIMB 11848 / C-107).